Reading from the N-terminus, the 405-residue chain is Phosphoglycerate kinase (405 aa).

Substrate is bound by residues 24–26 (DFN), Arg40, 63–66 (HLGR), Arg122, and Arg162. ATP-binding positions include Lys212, Glu331, and 361–364 (GGDS).

The protein belongs to the phosphoglycerate kinase family. Monomer.

It is found in the cytoplasm. The catalysed reaction is (2R)-3-phosphoglycerate + ATP = (2R)-3-phospho-glyceroyl phosphate + ADP. The protein operates within carbohydrate degradation; glycolysis; pyruvate from D-glyceraldehyde 3-phosphate: step 2/5. The sequence is that of Phosphoglycerate kinase (pgk) from Corynebacterium glutamicum (strain ATCC 13032 / DSM 20300 / JCM 1318 / BCRC 11384 / CCUG 27702 / LMG 3730 / NBRC 12168 / NCIMB 10025 / NRRL B-2784 / 534).